The chain runs to 208 residues: Type 4 adapter protein LvgA (208 aa).

The segment at 184–208 is disordered; the sequence is GYGYPPESPRENYKHPVSSATTARK.

The T4BSS is a complex nanomachine composed of several subcomplexes. This subunit is part of the Type IV Coupling Complex (T4CC), a subcomplex composed of the DotLMNYZ core and the IcmSW-LvgA adapter subunits, linked by the C-terminal tail of DotL.

Its subcellular location is the cytoplasm. Functionally, component of the Dot/Icm type IVB secretion system (T4BSS), which is used to inject bacterial effector proteins into eukaryotic host cells. Part of a subcomplex which recruits effector proteins and delivers them to the core transmembrane subcomplex. Is a critical subunit for binding a subset of effector proteins. Recognizes more than one type of binding motif. May be a critical factor that confers host specificity. Necessary for full virulence of the bacterium in guinea pigs and presumably humans. This chain is Type 4 adapter protein LvgA, found in Legionella pneumophila.